The chain runs to 758 residues: MTTLHFSGFPRVGAFRELKFAQEKYWRKEISEQELLAVAKDLREKNWKHQAAANADFVAVGDFTFYDHILDLQVATGAIPARFGFDSQNLSLEQFFQLARGNKDQFAIEMTKWFDTNYHYLVPEFHADTEFKANAKHYVQQLQEAQALGLKAKPTVVGPLTFLWVGKEKGTVEFNRLSLLQKLLPVYVEILNALVEAGAEWIQIDEPALTVDLPKEWVEAYKDVYATLSKVSAKILLSTYFGSVAEHAALLKSLPVDGLHIDLVRAPEQLDAFADYDKVLSAGIIDGRNIWRANLNKVLETVEPLQAKLGDRLWISSSCSLLHTPFDLSVEEKLKANKPDLYSWLAFTLQKTQELRVLKAALNEGRDSVAEELAASQAAADSRANSSEIHRADVAKRLADLPANADQRKSPFADRIKAQQAWLNLPLLPTTNIGSFPQTTEIRQARAAFKKGELSAADYEAAMKKEIALVVEEQEKLDLDVLVHGEAERNDMVEYFGELLSGFAFTQYGWVQSYGSRCVKPPIIFGDVSRPEAMTVAWSTYAQSLTKRPMKGMLTGPVTILQWSFVRNDIPRSTVCKQIALALNDEVLDLEKAGIKVIQIDEPAIREGLPLKRADWDAYLNWAGESFRLSSAGCEDSTQIHTHMCYSEFNDILPAIAAMDADVITIETSRSDMELLTAFGEFKYPNDIGPGVYDIHSPRVPTEAEVEHLLRKAIEVVPVERLWVNPDCGLKTRGWKETLEQLQVMMNVTHKLRAELAK.

Residues Arg-16 to Lys-19 and Lys-112 contribute to the 5-methyltetrahydropteroyltri-L-glutamate site. L-homocysteine is bound by residues Ile-433–Ser-435 and Glu-486. L-methionine-binding positions include Ile-433–Ser-435 and Glu-486. 5-methyltetrahydropteroyltri-L-glutamate contacts are provided by residues Arg-517–Cys-518 and Trp-563. Asp-601 contributes to the L-homocysteine binding site. Asp-601 contacts L-methionine. Glu-607 lines the 5-methyltetrahydropteroyltri-L-glutamate pocket. Zn(2+) is bound by residues His-643, Cys-645, and Glu-667. The active-site Proton donor is the His-696. Cys-728 lines the Zn(2+) pocket.

It belongs to the vitamin-B12 independent methionine synthase family. The cofactor is Zn(2+).

The catalysed reaction is 5-methyltetrahydropteroyltri-L-glutamate + L-homocysteine = tetrahydropteroyltri-L-glutamate + L-methionine. Its pathway is amino-acid biosynthesis; L-methionine biosynthesis via de novo pathway; L-methionine from L-homocysteine (MetE route): step 1/1. Functionally, catalyzes the transfer of a methyl group from 5-methyltetrahydrofolate to homocysteine resulting in methionine formation. The sequence is that of 5-methyltetrahydropteroyltriglutamate--homocysteine methyltransferase from Neisseria meningitidis serogroup C / serotype 2a (strain ATCC 700532 / DSM 15464 / FAM18).